We begin with the raw amino-acid sequence, 88 residues long: YcgL domain-containing protein CGSHiGG_01115 (88 aa).

Residues 1–85 (MLCAIYKSKK…QDDGLFNSLS (85 aa)) enclose the YcgL domain.

This is YcgL domain-containing protein CGSHiGG_01115 from Haemophilus influenzae (strain PittGG).